The following is a 640-amino-acid chain: 1-deoxy-D-xylulose-5-phosphate synthase (640 aa).

Thiamine diphosphate contacts are provided by residues His-72 and 113 to 115 (GHA). Asp-144 contacts Mg(2+). Thiamine diphosphate-binding positions include 145–146 (GA), Asn-174, Tyr-287, and Glu-370. Asn-174 lines the Mg(2+) pocket.

The protein belongs to the transketolase family. DXPS subfamily. Homodimer. It depends on Mg(2+) as a cofactor. The cofactor is thiamine diphosphate.

It carries out the reaction D-glyceraldehyde 3-phosphate + pyruvate + H(+) = 1-deoxy-D-xylulose 5-phosphate + CO2. It functions in the pathway metabolic intermediate biosynthesis; 1-deoxy-D-xylulose 5-phosphate biosynthesis; 1-deoxy-D-xylulose 5-phosphate from D-glyceraldehyde 3-phosphate and pyruvate: step 1/1. Its function is as follows. Catalyzes the acyloin condensation reaction between C atoms 2 and 3 of pyruvate and glyceraldehyde 3-phosphate to yield 1-deoxy-D-xylulose-5-phosphate (DXP). This is 1-deoxy-D-xylulose-5-phosphate synthase from Synechocystis sp. (strain ATCC 27184 / PCC 6803 / Kazusa).